The sequence spans 211 residues: Intermembrane phospholipid transport system binding protein MlaC (211 aa).

A signal peptide spans Met1–Ala21.

The protein belongs to the MlaC/ttg2D family. As to quaternary structure, interacts with the MlaA-OmpF outer membrane complex and with the inner membrane ABC transporter complex MlaFEDB, via direct interaction with MlaD.

Its subcellular location is the periplasm. In terms of biological role, involved in a phospholipid transport pathway that maintains lipid asymmetry in the outer membrane by retrograde trafficking of phospholipids from the outer membrane to the inner membrane. May transfer phospholipid across the periplasmic space and deliver it to the MlaFEDB complex at the inner membrane. The sequence is that of Intermembrane phospholipid transport system binding protein MlaC from Escherichia coli (strain K12).